A 255-amino-acid polypeptide reads, in one-letter code: Pyridoxine 5'-phosphate synthase (255 aa).

Asparagine 12 lines the 3-amino-2-oxopropyl phosphate pocket. 14-15 (DH) lines the 1-deoxy-D-xylulose 5-phosphate pocket. Residue arginine 23 coordinates 3-amino-2-oxopropyl phosphate. Histidine 48 (proton acceptor) is an active-site residue. 1-deoxy-D-xylulose 5-phosphate is bound by residues arginine 50 and histidine 55. Catalysis depends on glutamate 75, which acts as the Proton acceptor. Threonine 105 is a 1-deoxy-D-xylulose 5-phosphate binding site. Catalysis depends on histidine 199, which acts as the Proton donor. Residues glycine 200 and 221–222 (GF) contribute to the 3-amino-2-oxopropyl phosphate site.

The protein belongs to the PNP synthase family. In terms of assembly, homooctamer; tetramer of dimers.

The protein localises to the cytoplasm. The enzyme catalyses 3-amino-2-oxopropyl phosphate + 1-deoxy-D-xylulose 5-phosphate = pyridoxine 5'-phosphate + phosphate + 2 H2O + H(+). It participates in cofactor biosynthesis; pyridoxine 5'-phosphate biosynthesis; pyridoxine 5'-phosphate from D-erythrose 4-phosphate: step 5/5. Functionally, catalyzes the complicated ring closure reaction between the two acyclic compounds 1-deoxy-D-xylulose-5-phosphate (DXP) and 3-amino-2-oxopropyl phosphate (1-amino-acetone-3-phosphate or AAP) to form pyridoxine 5'-phosphate (PNP) and inorganic phosphate. This is Pyridoxine 5'-phosphate synthase from Rhodopseudomonas palustris (strain BisB18).